Reading from the N-terminus, the 561-residue chain is Dihydroxy-acid dehydratase (561 aa).

Residue Cys51 participates in [2Fe-2S] cluster binding. Mg(2+) is bound at residue Asp83. Position 124 (Cys124) interacts with [2Fe-2S] cluster. 2 residues coordinate Mg(2+): Asp125 and Lys126. Lys126 is subject to N6-carboxylysine. [2Fe-2S] cluster is bound at residue Cys196. Mg(2+) is bound at residue Glu448. The active-site Proton acceptor is the Ser473.

Belongs to the IlvD/Edd family. Homodimer. Requires [2Fe-2S] cluster as cofactor. Mg(2+) serves as cofactor.

It catalyses the reaction (2R)-2,3-dihydroxy-3-methylbutanoate = 3-methyl-2-oxobutanoate + H2O. The catalysed reaction is (2R,3R)-2,3-dihydroxy-3-methylpentanoate = (S)-3-methyl-2-oxopentanoate + H2O. The protein operates within amino-acid biosynthesis; L-isoleucine biosynthesis; L-isoleucine from 2-oxobutanoate: step 3/4. It participates in amino-acid biosynthesis; L-valine biosynthesis; L-valine from pyruvate: step 3/4. Functionally, functions in the biosynthesis of branched-chain amino acids. Catalyzes the dehydration of (2R,3R)-2,3-dihydroxy-3-methylpentanoate (2,3-dihydroxy-3-methylvalerate) into 2-oxo-3-methylpentanoate (2-oxo-3-methylvalerate) and of (2R)-2,3-dihydroxy-3-methylbutanoate (2,3-dihydroxyisovalerate) into 2-oxo-3-methylbutanoate (2-oxoisovalerate), the penultimate precursor to L-isoleucine and L-valine, respectively. The polypeptide is Dihydroxy-acid dehydratase (Sulfolobus acidocaldarius (strain ATCC 33909 / DSM 639 / JCM 8929 / NBRC 15157 / NCIMB 11770)).